The following is a 221-amino-acid chain: GTP-binding nuclear protein Ran-2 (221 aa).

One can recognise a Small GTPase Ran-type domain in the interval 10-174 (DYPSFKLVIV…LYLARKLAGD (165 aa)). GTP is bound at residue 21–28 (DGGTGKTT). The switch-I stretch occupies residues 40–48 (KKYEPTIGV). Residues Gly71, 125-128 (NKVD), and 153-155 (SAK) each bind GTP. Residues 71–87 (GQEKFGGLRDGYYIHGQ) form a switch-II region.

The protein belongs to the small GTPase superfamily. Ran family. As to quaternary structure, found in a nuclear export complex with RanGTP, exportin and pre-miRNA.

The protein resides in the nucleus. In terms of biological role, GTP-binding protein involved in nucleocytoplasmic transport. Required for the import of protein into the nucleus and also for RNA export. Involved in chromatin condensation and control of cell cycle. The sequence is that of GTP-binding nuclear protein Ran-2 (RAN2) from Oryza sativa subsp. indica (Rice).